Consider the following 824-residue polypeptide: Intraflagellar transport protein 88 homolog (824 aa).

Positions 113 to 134 (FDPLSQSRGPASPLEAKKKDSP) are disordered. 12 TPR repeats span residues 197–230 (YSVLFNLASQYSVNEMYAEALNTYQVIVKNKMFS), 233–266 (GILKMNMGNIYLKQRNYSKAIKFYRMALDQVPSV), 272–305 (IKIMQNIGVTFIQAGQYSDAINSYEHIMSMAPNL), 307–338 (AGYNLTICYFAIGDREKMKKAFQKLITVPLEI), 415–448 (NDLEINKAVTYLRQKDYNQAVEILKVLEKKDSRV), 450–483 (SAAATNLSALYYMGKDFAQASSYADIAVNSDRYN), 484–517 (PAALTNKGNTVFANGDYEKAAEFYKEALRNDSSC), 518–551 (TEALYNIGLTYEKLNRLDEALDCFLKLHAILRNS), 552–585 (AEVLYQIANIYELMENPSQAIEWLMQVVSVIPTD), 586–619 (PQVLSKLGELYDREGDKSQAFQYYYESYRYFPCN), 620–653 (IEVIEWLGAYYIDTQFWEKAIQYFERASLIQPTQ), and 654–687 (VKWQLMVASCFRRSGNYQKALDTYKDTHRKFPEN). Residues 724-824 (EQRIKSGRDG…EELGDDLLPE (101 aa)) are disordered. The span at 748–757 (DSGQNYSASS) shows a compositional bias: polar residues. Residues 797 to 808 (ERPKTAAKKRID) are compositionally biased toward basic and acidic residues. The span at 809–824 (EDDFADEELGDDLLPE) shows a compositional bias: acidic residues.

In terms of assembly, component of the IFT complex B, at least composed of IFT20, IFT22, IFT25, IFT27, IFT46, IFT52, TRAF3IP1/IFT54, IFT57, IFT74, IFT80, IFT81, and IFT88. Interacts with IFT20, IFT22, IFT25, IFT27, IFT52, TRAF3IP1, IFT74, IFT80 and IFT81. Interacts with IFT172. Interacts with IFT57. Interacts with IFT46. Interacts with IFT70B. Interacts with C2CD3. Interacts with ENTR1 (via N-terminus). Interacts with LRRC56. Interacts with DZIP1. Interacts with CCDC38. Interacts with CCDC146. Interacts with CFAP53. Expressed in the heart, brain, liver, lung, kidney, skeletal muscle and pancreas.

It localises to the cytoplasm. The protein resides in the cytoskeleton. It is found in the microtubule organizing center. The protein localises to the centrosome. Its subcellular location is the centriole. It localises to the cell projection. The protein resides in the cilium. It is found in the cilium basal body. The protein localises to the flagellum. Its function is as follows. Positively regulates primary cilium biogenesis. Also involved in autophagy since it is required for trafficking of ATG16L and the expansion of the autophagic compartment. This chain is Intraflagellar transport protein 88 homolog (IFT88), found in Homo sapiens (Human).